The following is a 371-amino-acid chain: Protein SPATA31F3 (371 aa).

The helical transmembrane segment at 7–29 (ILWDVGSSVYTYGSLFIIALIIW) threads the bilayer. Positions 62-86 (LRVKKRTTKEETEKLQKLLSNMKRQ) form a coiled coil. 2 stretches are compositionally biased toward polar residues: residues 189 to 203 (LSKV…LSSQ) and 244 to 266 (PQQQ…SSSS). Disordered regions lie at residues 189–222 (LSKV…STDQ), 240–299 (YHPA…EAEM), and 326–371 (YKSE…KRNI). Residues Ser-197 and Ser-198 each carry the phosphoserine modification. A compositionally biased stretch (basic residues) spans 277 to 287 (QKKRKKTKKLV). A compositionally biased stretch (basic and acidic residues) spans 330 to 362 (TGAKPKTGEPKKSSAKVRAEEPNLEKHAKDLKA).

It belongs to the SPATA31 family.

It localises to the membrane. This is Protein SPATA31F3 (Spata31f3) from Mus musculus (Mouse).